Consider the following 418-residue polypeptide: Glutamyl-tRNA reductase (418 aa).

Substrate contacts are provided by residues 49 to 52 (TCNR), Ser109, 114 to 116 (EPQ), and Gln120. Catalysis depends on Cys50, which acts as the Nucleophile. 189–194 (GAGETI) contributes to the NADP(+) binding site.

This sequence belongs to the glutamyl-tRNA reductase family. In terms of assembly, homodimer.

It carries out the reaction (S)-4-amino-5-oxopentanoate + tRNA(Glu) + NADP(+) = L-glutamyl-tRNA(Glu) + NADPH + H(+). It functions in the pathway porphyrin-containing compound metabolism; protoporphyrin-IX biosynthesis; 5-aminolevulinate from L-glutamyl-tRNA(Glu): step 1/2. Functionally, catalyzes the NADPH-dependent reduction of glutamyl-tRNA(Glu) to glutamate 1-semialdehyde (GSA). This is Glutamyl-tRNA reductase from Escherichia coli O9:H4 (strain HS).